Reading from the N-terminus, the 98-residue chain is Integration host factor subunit beta (98 aa).

It belongs to the bacterial histone-like protein family. In terms of assembly, heterodimer of an alpha and a beta chain.

Functionally, this protein is one of the two subunits of integration host factor, a specific DNA-binding protein that functions in genetic recombination as well as in transcriptional and translational control. The polypeptide is Integration host factor subunit beta (Marinobacter nauticus (strain ATCC 700491 / DSM 11845 / VT8) (Marinobacter aquaeolei)).